The sequence spans 517 residues: Nicotine N-demethylase CYP82E4 (517 aa).

Residues 2–22 (LSPIEAIVGLVTFTFLFYFLW) form a helical membrane-spanning segment. K254 is covalently cross-linked (Glycyl lysine isopeptide (Lys-Gly) (interchain with G-Cter in ubiquitin)). C457 provides a ligand contact to heme.

The protein belongs to the cytochrome P450 family. CYP82E2 subfamily. Heme serves as cofactor. In terms of tissue distribution, expressed in leaves.

The protein resides in the membrane. The enzyme catalyses (S)-nicotine + reduced [NADPH--hemoprotein reductase] + O2 = (S)-nornicotine + formaldehyde + oxidized [NADPH--hemoprotein reductase] + H2O + H(+). It participates in alkaloid biosynthesis; nicotine biosynthesis. Functionally, involved in the biosynthesis of pyridine alkaloid natural products, leading mainly to the production of anabasine, anatabine, nicotine and nornicotine, effective deterrents against herbivores with antiparasitic and pesticide properties (neurotoxins); nornicotine serves as the precursor in the synthesis of the carcinogen compound N'-nitrosonornicotine (NNN). Catalyzes the demethylation of nicotine to form nornicotine. The protein is Nicotine N-demethylase CYP82E4 of Nicotiana tomentosiformis (Tobacco).